The primary structure comprises 2388 residues: Spectrin beta chain, non-erythrocytic 2 (2388 aa).

Serine 2 carries the N-acetylserine modification. The actin-binding stretch occupies residues 2-278 (SSTLSPTDFD…IITYVATYYH (277 aa)). Phosphoserine occurs at positions 6 and 31. 2 consecutive Calponin-homology (CH) domains span residues 57–161 (AVQK…LRFQ) and 176–281 (KSAK…HYFS). Spectrin repeat units follow at residues 306–414 (LVEK…LALR), 427–527 (AARF…RERL), 532–639 (ELQK…RLEE), 642–744 (RLWR…QRLA), 749–849 (LYQF…RALE), and 856–954 (TMLS…KAAL). Serine 959 carries the post-translational modification Phosphoserine. 11 Spectrin repeats span residues 960-1063 (IQNY…SLGE), 1066-1169 (RLQD…GRLA), 1174-1266 (FQGF…NQEA), 1279-1379 (EQQH…ARSL), 1384-1485 (RAEL…RRLQ), 1489-1586 (EQHQ…RLEE), 1589-1692 (RAQQ…RLQE), 1696-1797 (LCQL…GQVL), 1801-1904 (YELQ…QLLL), 1910-2010 (FRFF…DWLQ), and 2017-2078 (VFGR…LTAL). Serine 1073 bears the Phosphoserine mark. Phosphoserine is present on serine 1574. A compositionally biased stretch (basic and acidic residues) spans 2080–2096 (ERENEQKRKREEEERRK). 2 disordered regions span residues 2080–2112 (EREN…EGSL) and 2124–2207 (DGTQ…HVAT). Residues 2124–2163 (DGTQSKLPPSTQAPSINGVCTDTESSQPLLEQQRLEQSNV) are compositionally biased toward polar residues. Phosphoserine occurs at positions 2169 and 2199. In terms of domain architecture, PH spans 2218-2328 (QEQMEGTLCR…WLRVVNAAIA (111 aa)). Residues 2333–2388 (ASGEPEEPVVPSASRGLTRAMTMPPVSQPEGSIVLRSKDGREREREKRFSFFKKNK) form a disordered region. Position 2354 is a phosphothreonine (threonine 2354). A Phosphoserine modification is found at serine 2359. The segment covering 2368–2381 (RSKDGREREREKRF) has biased composition (basic and acidic residues).

This sequence belongs to the spectrin family. In terms of tissue distribution, abundantly transcribed in the brain. Neurons are the predominant cell-type to express the gene. Found abundantly in Purkinje cells.

It localises to the cytoplasm. The protein resides in the cytoskeleton. Its subcellular location is the cell cortex. In terms of biological role, probably plays an important role in neuronal membrane skeleton. The protein is Spectrin beta chain, non-erythrocytic 2 (Sptbn2) of Rattus norvegicus (Rat).